The chain runs to 474 residues: Putative response regulator NtrX-like (474 aa).

The Response regulatory domain maps to 5–121 (DVLIVDDEES…KLVILLTRAC (117 aa)). The residue at position 54 (aspartate 54) is a 4-aspartylphosphate. A Sigma-54 factor interaction domain is found at 143–368 (LVGECSVTLK…LRNVVEWTLI (226 aa)). Residues 171-178 (GKVGSGKE) and 231-240 (ANNGTLYIDE) each bind ATP.

Member of the two-component regulatory system RC0849/RC0948. This is Putative response regulator NtrX-like from Rickettsia conorii (strain ATCC VR-613 / Malish 7).